Here is a 205-residue protein sequence, read N- to C-terminus: Microtubule-associated protein Jupiter (205 aa).

Serine 30 is subject to Phosphoserine. A phosphothreonine mark is found at threonine 41, threonine 98, and threonine 102. Polar residues predominate over residues 124–135 (LISNSKGNYNGK). The interval 124–205 (LISNSKGNYN…PPGGYSSGLW (82 aa)) is disordered. The segment covering 136–149 (SGSVSSASSSVSSS) has biased composition (low complexity). Phosphoserine occurs at positions 138 and 149. Polar residues predominate over residues 181–191 (PANNGSSQVIN).

The protein belongs to the MAP Jupiter family.

It is found in the nucleus. It localises to the cytoplasm. Its subcellular location is the cytoskeleton. The protein resides in the spindle. Binds to all microtubule populations. This is Microtubule-associated protein Jupiter from Drosophila virilis (Fruit fly).